A 156-amino-acid chain; its full sequence is Endogenous retrovirus group K member 24 Pro protein (156 aa).

The Peptidase A2 domain maps to 21 to 96; that stretch reads FEGLVDTGAD…IPLNLWGRDL (76 aa). The active site involves Asp-26. Positions 111–156 constitute a G-patch domain; sequence YSPTSQKIMTKMGYIPGKGLGKNEDGIKIPFEAKINQKREGIGYPF.

This sequence belongs to the peptidase A2 family. HERV class-II K(HML-2) subfamily. In terms of assembly, active as a homodimer. In terms of processing, autoproteolytically processed at the N-terminus. Expected C-terminal autoprocessing not detected. The sequence shown is that of the processed Pro protein.

It catalyses the reaction Processing at the authentic HIV-1 PR recognition site and release of the mature p17 matrix and the p24 capsid protein, as a result of the cleavage of the -SQNY-|-PIVQ- cleavage site.. Functionally, retroviral proteases have roles in processing of the primary translation products and the maturation of the viral particle. Endogenous Pro proteins may have kept, lost or modified their original function during evolution. This endogenous protein has retained most of the characteristics of retroviral proteases. The sequence is that of Endogenous retrovirus group K member 24 Pro protein (ERVK-24) from Homo sapiens (Human).